We begin with the raw amino-acid sequence, 444 residues long: Phosphoribosylamine--glycine ligase (444 aa).

In terms of domain architecture, ATP-grasp spans 109 to 324; sequence RNLFKKYEID…FLDVCFAIAE (216 aa). 140–202 provides a ligand contact to ATP; it reads MTSLGKDVVV…EEKLVGVEFT (63 aa). Positions 282, 294, and 296 each coordinate Mg(2+). The Mn(2+) site is built by glutamine 282, glutamate 294, and asparagine 296.

Belongs to the GARS family. The cofactor is Mg(2+). It depends on Mn(2+) as a cofactor.

It catalyses the reaction 5-phospho-beta-D-ribosylamine + glycine + ATP = N(1)-(5-phospho-beta-D-ribosyl)glycinamide + ADP + phosphate + H(+). It participates in purine metabolism; IMP biosynthesis via de novo pathway; N(1)-(5-phospho-D-ribosyl)glycinamide from 5-phospho-alpha-D-ribose 1-diphosphate: step 2/2. This is Phosphoribosylamine--glycine ligase from Methanococcus maripaludis (strain C7 / ATCC BAA-1331).